Consider the following 233-residue polypeptide: uncharacterized protein (233 aa).

2 disordered regions span residues 1–159 (MGKH…NEKL) and 181–206 (MGVK…QDKM). The segment covering 36–115 (RDRSRSPHKE…RRDDKNRLSA (80 aa)) has biased composition (basic and acidic residues). Residues 135-148 (SSSSNTTDTASSSS) are compositionally biased toward low complexity. Residues 189-206 (PTDDSSRLSDEKNRQDKM) show a composition bias toward basic and acidic residues.

This is an uncharacterized protein from Caenorhabditis elegans.